The chain runs to 202 residues: Dephospho-CoA kinase (202 aa).

Residues 5–202 (ILGLTGGIGS…FYLTLRGGQP (198 aa)) enclose the DPCK domain. Residue 13–18 (GSGKSA) participates in ATP binding.

It belongs to the CoaE family.

It localises to the cytoplasm. It catalyses the reaction 3'-dephospho-CoA + ATP = ADP + CoA + H(+). The protein operates within cofactor biosynthesis; coenzyme A biosynthesis; CoA from (R)-pantothenate: step 5/5. Its function is as follows. Catalyzes the phosphorylation of the 3'-hydroxyl group of dephosphocoenzyme A to form coenzyme A. The chain is Dephospho-CoA kinase from Stutzerimonas stutzeri (Pseudomonas stutzeri).